A 510-amino-acid polypeptide reads, in one-letter code: Lysine--tRNA ligase (510 aa).

Mg(2+) is bound by residues Glu420 and Glu427.

It belongs to the class-II aminoacyl-tRNA synthetase family. In terms of assembly, homodimer. Mg(2+) serves as cofactor.

The protein localises to the cytoplasm. It carries out the reaction tRNA(Lys) + L-lysine + ATP = L-lysyl-tRNA(Lys) + AMP + diphosphate. This is Lysine--tRNA ligase from Vibrio campbellii (strain ATCC BAA-1116).